Reading from the N-terminus, the 934-residue chain is Diacylglycerol kinase theta (934 aa).

The segment at 1-50 is disordered; sequence MAAAAEPGARTWPGSGSPRLGSPAGSPVLGISGRTRPGSGPERTSRAIGS. Ser-22 and Ser-26 each carry phosphoserine. 3 consecutive Phorbol-ester/DAG-type zinc fingers follow at residues 54–102, 115–162, and 177–228; these read GHSF…KTPC, AHCF…CSDC, and HHHW…APEC. Residues 387–486 form the Ras-associating domain; it reads TQEILKIYPG…TRFYVAETRA (100 aa). 2 consecutive short sequence motifs (LXXLL motif) follow at residues 547–551 and 566–570; these read LYMLA and LPDVL. The 138-residue stretch at 576 to 713 folds into the DAGKc domain; that stretch reads PDCCPLLVFV…MDRWTILLDA (138 aa). Residues 905–916 are compositionally biased toward basic residues; it reads LRKAKQKPRKAG. Residues 905–934 are disordered; the sequence is LRKAKQKPRKAGANRDTRVDTLPAPEGNPL.

The protein belongs to the eukaryotic diacylglycerol kinase family. In terms of assembly, interacts with RHOA (constitutively activated, GTP-bound); the interaction inhibits DGKQ. Interacts with PRKCE. Interacts with PRKCH. Interacts with PLCB1. Interacts with NR5A1; the interaction requires both LXXLL motifs in DGKQ and is required for full phosphatidic acid-mediated activation of NR5A1. Post-translationally, phosphorylated by PRKCE and PRKCH in vitro. As to expression, widely expressed in all brain regions, including the cortex and hippocampus with a specific expression in neuronal cells (at protein level).

It is found in the cytoplasm. The protein localises to the cytosol. It localises to the cell membrane. The protein resides in the synapse. Its subcellular location is the cytoskeleton. It is found in the nucleus. The protein localises to the nucleus speckle. It localises to the nucleus matrix. It carries out the reaction a 1,2-diacyl-sn-glycerol + ATP = a 1,2-diacyl-sn-glycero-3-phosphate + ADP + H(+). The catalysed reaction is a 1-O-alkyl-sn-glycerol + ATP = a 1-O-alkyl-sn-glycero-3-phosphate + ADP + H(+). The enzyme catalyses 1-O-alkyl-2-acyl-sn-glycerol + ATP = 1-O-alkyl-2-acyl-sn-glycero-3-phosphate + ADP + H(+). It catalyses the reaction 1,2-di-(9Z-octadecenoyl)-sn-glycerol + ATP = 1,2-di-(9Z-octadecenoyl)-sn-glycero-3-phosphate + ADP + H(+). It carries out the reaction 1-O-hexadecyl-sn-glycerol + ATP = 1-O-hexadecyl-sn-glycero-3-phosphate + ADP + H(+). The catalysed reaction is 1-O-hexadecyl-2-acetyl-sn-glycerol + ATP = 1-O-hexadecyl-2-acetyl-sn-glycero-3-phosphate + ADP + H(+). The enzyme catalyses 1-octadecanoyl-2-(5Z,8Z,11Z,14Z-eicosatetraenoyl)-sn-glycerol + ATP = 1-octadecanoyl-2-(5Z,8Z,11Z,14Z-eicosatetraenoyl)-sn-glycero-3-phosphate + ADP + H(+). It participates in lipid metabolism; glycerolipid metabolism. Its activity is regulated as follows. Activated by phosphatidylserine. In terms of biological role, diacylglycerol kinase that converts diacylglycerol/DAG into phosphatidic acid/phosphatidate/PA and regulates the respective levels of these two bioactive lipids. Thereby, acts as a central switch between the signaling pathways activated by these second messengers with different cellular targets and opposite effects in numerous biological processes. Within the adrenocorticotropic hormone signaling pathway, produces phosphatidic acid which in turn activates NR5A1 and subsequent steroidogenic gene transcription. Also functions downstream of the nerve growth factor signaling pathway being specifically activated in the nucleus by the growth factor. Through its diacylglycerol activity also regulates synaptic vesicle endocytosis. This chain is Diacylglycerol kinase theta (Dgkq), found in Mus musculus (Mouse).